The following is a 178-amino-acid chain: Ribulose bisphosphate carboxylase small subunit, chloroplastic 4 (178 aa).

The transit peptide at 1 to 54 (MASISSTVATVSRAAPAQANMVAPFTGLKSNAAFPATKKANDFSTLPSNGGRVQ) directs the protein to the chloroplast.

The protein belongs to the RuBisCO small chain family. As to quaternary structure, heterohexadecamer of 8 large and 8 small subunits.

The protein localises to the plastid. It localises to the chloroplast. Functionally, ruBisCO catalyzes two reactions: the carboxylation of D-ribulose 1,5-bisphosphate, the primary event in carbon dioxide fixation, as well as the oxidative fragmentation of the pentose substrate. Both reactions occur simultaneously and in competition at the same active site. Although the small subunit is not catalytic it is essential for maximal activity. The chain is Ribulose bisphosphate carboxylase small subunit, chloroplastic 4 from Flaveria pringlei.